The sequence spans 509 residues: Metal transporter Nramp3 (509 aa).

A compositionally biased stretch (low complexity) spans 1 to 12; that stretch reads MPQLENNEPLLI. Residues 1 to 25 form a disordered region; the sequence is MPQLENNEPLLINEEEEEETAYDET. Positions 13–23 are enriched in acidic residues; it reads NEEEEEETAYD. 12 consecutive transmembrane segments (helical) span residues 56–76, 84–104, 133–153, 165–185, 193–213, 239–259, 285–305, 327–347, 383–403, 406–426, 444–464, and 472–492; these read LWLFTGPGFLMSIAFLDPGNL, AVAGYSLLWLLMWATAMGLLV, MVLWVMAELALIGSDIQEVIG, ILPLWAGVVITALDCFVFLFL, LEAVFAVLIATMGVSFAWMFG, AVGVVGCIIMPHNVFLHSALV, IALFISFLINLFVTTVFAKGF, YGGGVFPILYIWAIGLLAAGQ, IIPTIIVALVFDSSEATLDVL, WLNVLQSIQIPFALIPLLCLV, IAWLVAALVIMINGYLLLEFF, and VYTGFVTLFTASYGAFILYLI.

This sequence belongs to the NRAMP (TC 2.A.55) family. As to expression, expressed in vascular tissues.

The protein resides in the vacuole membrane. In terms of biological role, vacuolar metal transporter involved in intracellular metal homeostasis. Can transport iron (Fe), manganese (Mn) and cadmium (Cd). Regulates metal accumulation under Fe starvation. Acts redundantly with NRAMP4 to mobilize vacuolar Fe and provide sufficient Fe during seed germination. In association with NRAMP4, required for optimal growth and photosynthesis under Mn deficiency. Exports Mn from vacuoles in leaf mesophyll cells, making Mn available for functional photosystem II in chloroplasts. Involved in basal resistance to the bacterial pathogen E.chrysanthemi. In Arabidopsis thaliana (Mouse-ear cress), this protein is Metal transporter Nramp3 (NRAMP3).